Here is a 185-residue protein sequence, read N- to C-terminus: NOP protein chaperone 1 (185 aa).

3 positions are modified to phosphoserine: Ser-34, Ser-66, and Ser-177. The interval Ser-121–Gln-185 is disordered.

Interacts with NOP58, RUVBL1 and RUVBL2; the interactions are direct and NOPCHAP1 bridges the association of NOP58 with RUVBL1:RUVBL2 even in absence of snoRNAs. The interactions with RUVBL1 and RUVBL2 are disrupted upon ATP binding.

It localises to the nucleus. Functionally, client-loading PAQosome/R2TP complex cofactor that selects NOP58 to promote box C/D small nucleolar ribonucleoprotein (snoRNP) assembly. Acts as a bridge between NOP58 and the R2TP complex via RUVBL1:RUVBL2. The polypeptide is NOP protein chaperone 1 (Mus musculus (Mouse)).